The primary structure comprises 206 residues: Large ribosomal subunit protein uL4 (206 aa).

The protein belongs to the universal ribosomal protein uL4 family. Part of the 50S ribosomal subunit.

Its function is as follows. One of the primary rRNA binding proteins, this protein initially binds near the 5'-end of the 23S rRNA. It is important during the early stages of 50S assembly. It makes multiple contacts with different domains of the 23S rRNA in the assembled 50S subunit and ribosome. Forms part of the polypeptide exit tunnel. The chain is Large ribosomal subunit protein uL4 from Afipia carboxidovorans (strain ATCC 49405 / DSM 1227 / KCTC 32145 / OM5) (Oligotropha carboxidovorans).